A 296-amino-acid polypeptide reads, in one-letter code: tRNA dimethylallyltransferase (296 aa).

2–9 (GPTASGKT) is an ATP binding site. A substrate-binding site is contributed by 4-9 (TASGKT). Interaction with substrate tRNA stretches follow at residues 27–30 (DSAL), 151–155 (QRLSR), and 232–237 (RCVGYR).

The protein belongs to the IPP transferase family. In terms of assembly, monomer. Mg(2+) is required as a cofactor.

It catalyses the reaction adenosine(37) in tRNA + dimethylallyl diphosphate = N(6)-dimethylallyladenosine(37) in tRNA + diphosphate. Catalyzes the transfer of a dimethylallyl group onto the adenine at position 37 in tRNAs that read codons beginning with uridine, leading to the formation of N6-(dimethylallyl)adenosine (i(6)A). This chain is tRNA dimethylallyltransferase, found in Shewanella baltica (strain OS155 / ATCC BAA-1091).